Reading from the N-terminus, the 1368-residue chain is DNA-directed RNA polymerase subunit beta (1368 aa).

The protein belongs to the RNA polymerase beta chain family. As to quaternary structure, the RNAP catalytic core consists of 2 alpha, 1 beta, 1 beta' and 1 omega subunit. When a sigma factor is associated with the core the holoenzyme is formed, which can initiate transcription.

The enzyme catalyses RNA(n) + a ribonucleoside 5'-triphosphate = RNA(n+1) + diphosphate. DNA-dependent RNA polymerase catalyzes the transcription of DNA into RNA using the four ribonucleoside triphosphates as substrates. This Legionella pneumophila (strain Paris) protein is DNA-directed RNA polymerase subunit beta.